The chain runs to 288 residues: Ribosomal protein L11 methyltransferase (288 aa).

S-adenosyl-L-methionine contacts are provided by Thr-141, Gly-164, Asp-186, and Asn-227.

Belongs to the methyltransferase superfamily. PrmA family.

Its subcellular location is the cytoplasm. It carries out the reaction L-lysyl-[protein] + 3 S-adenosyl-L-methionine = N(6),N(6),N(6)-trimethyl-L-lysyl-[protein] + 3 S-adenosyl-L-homocysteine + 3 H(+). Methylates ribosomal protein L11. The sequence is that of Ribosomal protein L11 methyltransferase from Myxococcus xanthus (strain DK1622).